Consider the following 135-residue polypeptide: uncharacterized protein (135 aa).

This is an uncharacterized protein from Aquifex aeolicus (strain VF5).